Consider the following 432-residue polypeptide: Adenylosuccinate synthetase (432 aa).

GTP is bound by residues 13–19 (GDEGKGK) and 41–43 (GHT). The active-site Proton acceptor is the D14. Residues D14 and G41 each coordinate Mg(2+). Residues 14 to 17 (DEGK), 39 to 42 (NAGH), T130, R144, Q225, T240, and R304 contribute to the IMP site. The active-site Proton donor is H42. 300–306 (ATTGRKR) contributes to the substrate binding site. Residues R306, 332-334 (KLD), and 415-417 (STG) each bind GTP.

The protein belongs to the adenylosuccinate synthetase family. In terms of assembly, homodimer. It depends on Mg(2+) as a cofactor.

Its subcellular location is the cytoplasm. The enzyme catalyses IMP + L-aspartate + GTP = N(6)-(1,2-dicarboxyethyl)-AMP + GDP + phosphate + 2 H(+). It participates in purine metabolism; AMP biosynthesis via de novo pathway; AMP from IMP: step 1/2. Functionally, plays an important role in the de novo pathway of purine nucleotide biosynthesis. Catalyzes the first committed step in the biosynthesis of AMP from IMP. The protein is Adenylosuccinate synthetase of Alteromonas mediterranea (strain DSM 17117 / CIP 110805 / LMG 28347 / Deep ecotype).